A 356-amino-acid chain; its full sequence is 3-deoxy-alpha-D-manno-octulosonate 8-oxidase (356 aa).

It belongs to the iron-containing alcohol dehydrogenase family. A divalent metal cation serves as cofactor.

The enzyme catalyses 3-deoxy-alpha-D-manno-oct-2-ulosonate + O2 = 3,8-dideoxy-8-oxo-alpha-D-manno-octulosonate + H2O2. It participates in bacterial outer membrane biogenesis; lipopolysaccharide biosynthesis. With respect to regulation, inhibited by EDTA. In terms of biological role, catalyzes the first step of the biosynthesis of Kdo8N (8-amino-3,8-dideoxy-D-manno-octulosonate) from Kdo (3-deoxy-D-manno-octulosonate). In Shewanella oneidensis (strain ATCC 700550 / JCM 31522 / CIP 106686 / LMG 19005 / NCIMB 14063 / MR-1), this protein is 3-deoxy-alpha-D-manno-octulosonate 8-oxidase.